A 473-amino-acid chain; its full sequence is Serine palmitoyltransferase 1 (473 aa).

The Lumenal portion of the chain corresponds to 1–15 (MATATEQWVLVEMVQ). The interaction with SPTLC2 stretch occupies residues 1–66 (MATATEQWVL…KEELIEEWQP (66 aa)). Residues 16–36 (ALYEAPAYHLILEGILILWII) traverse the membrane as a helical segment. Over 37-473 (RLLFSKTYKL…IKEVAQAVLL (437 aa)) the chain is Cytoplasmic. A Phosphotyrosine; by ABL modification is found at Tyr164.

It belongs to the class-II pyridoxal-phosphate-dependent aminotransferase family. As to quaternary structure, component of the serine palmitoyltransferase (SPT) complex, which is also composed of SPTLC2 or SPTLC3 and SPTSSA or SPTSSB. The heterodimer consisting of SPTLC1 and SPTLC2/SPTLC3 forms the catalytic core of the enzyme, while SPTSSA or SPTSSB subunits determine substrate specificity. SPT also interacts with ORMDL proteins, especially ORMDL3, which negatively regulate SPT activity in the presence of ceramides. Forms dimers of heterodimers with SPTLC2. Interacts with RTN4 (isoform B). Pyridoxal 5'-phosphate serves as cofactor. In terms of processing, phosphorylation at Tyr-164 inhibits activity and promotes cell survival. As to expression, widely expressed. Not detected in small intestine.

The protein localises to the endoplasmic reticulum membrane. The catalysed reaction is L-serine + hexadecanoyl-CoA + H(+) = 3-oxosphinganine + CO2 + CoA. It catalyses the reaction octadecanoyl-CoA + L-serine + H(+) = 3-oxoeicosasphinganine + CO2 + CoA. The enzyme catalyses tetradecanoyl-CoA + L-serine + H(+) = 3-oxohexadecasphinganine + CO2 + CoA. It carries out the reaction dodecanoyl-CoA + L-serine + H(+) = 3-oxotetradecasphinganine + CO2 + CoA. It functions in the pathway lipid metabolism; sphingolipid metabolism. SPT complex catalytic activity is negatively regulated by ORMDL proteins, including ORMDL3, in the presence of ceramides. This mechanism allows to maintain ceramide levels at sufficient concentrations for the production of complex sphingolipids, but which prevents the accumulation of ceramides to levels that trigger apoptosis. Its function is as follows. Component of the serine palmitoyltransferase multisubunit enzyme (SPT) that catalyzes the initial and rate-limiting step in sphingolipid biosynthesis by condensing L-serine and activated acyl-CoA (most commonly palmitoyl-CoA) to form long-chain bases. The SPT complex is also composed of SPTLC2 or SPTLC3 and SPTSSA or SPTSSB. Within this complex, the heterodimer with SPTLC2 or SPTLC3 forms the catalytic core. The composition of the serine palmitoyltransferase (SPT) complex determines the substrate preference. The SPTLC1-SPTLC2-SPTSSA complex shows a strong preference for C16-CoA substrate, while the SPTLC1-SPTLC3-SPTSSA isozyme uses both C14-CoA and C16-CoA as substrates, with a slight preference for C14-CoA. The SPTLC1-SPTLC2-SPTSSB complex shows a strong preference for C18-CoA substrate, while the SPTLC1-SPTLC3-SPTSSB isozyme displays an ability to use a broader range of acyl-CoAs, without apparent preference. Required for adipocyte cell viability and metabolic homeostasis. This is Serine palmitoyltransferase 1 (SPTLC1) from Homo sapiens (Human).